A 362-amino-acid polypeptide reads, in one-letter code: 3-dehydroquinate synthase (362 aa).

NAD(+)-binding positions include 72 to 77 (SGEEAK), 106 to 110 (GVTGD), 130 to 131 (TT), Lys142, and Lys151. Positions 184, 246, and 263 each coordinate Zn(2+).

The protein belongs to the sugar phosphate cyclases superfamily. Dehydroquinate synthase family. Requires Co(2+) as cofactor. It depends on Zn(2+) as a cofactor. NAD(+) serves as cofactor.

The protein resides in the cytoplasm. It carries out the reaction 7-phospho-2-dehydro-3-deoxy-D-arabino-heptonate = 3-dehydroquinate + phosphate. The protein operates within metabolic intermediate biosynthesis; chorismate biosynthesis; chorismate from D-erythrose 4-phosphate and phosphoenolpyruvate: step 2/7. Functionally, catalyzes the conversion of 3-deoxy-D-arabino-heptulosonate 7-phosphate (DAHP) to dehydroquinate (DHQ). The polypeptide is 3-dehydroquinate synthase (Bacillus velezensis (strain DSM 23117 / BGSC 10A6 / LMG 26770 / FZB42) (Bacillus amyloliquefaciens subsp. plantarum)).